The sequence spans 113 residues: Large ribosomal subunit protein eL31B (113 aa).

The protein belongs to the eukaryotic ribosomal protein eL31 family. As to quaternary structure, component of the large ribosomal subunit (LSU). Mature yeast ribosomes consist of a small (40S) and a large (60S) subunit. The 40S small subunit contains 1 molecule of ribosomal RNA (18S rRNA) and 33 different proteins (encoded by 57 genes). The large 60S subunit contains 3 rRNA molecules (25S, 5.8S and 5S rRNA) and 46 different proteins (encoded by 81 genes).

Its subcellular location is the cytoplasm. Component of the ribosome, a large ribonucleoprotein complex responsible for the synthesis of proteins in the cell. The small ribosomal subunit (SSU) binds messenger RNAs (mRNAs) and translates the encoded message by selecting cognate aminoacyl-transfer RNA (tRNA) molecules. The large subunit (LSU) contains the ribosomal catalytic site termed the peptidyl transferase center (PTC), which catalyzes the formation of peptide bonds, thereby polymerizing the amino acids delivered by tRNAs into a polypeptide chain. The nascent polypeptides leave the ribosome through a tunnel in the LSU and interact with protein factors that function in enzymatic processing, targeting, and the membrane insertion of nascent chains at the exit of the ribosomal tunnel. The sequence is that of Large ribosomal subunit protein eL31B from Saccharomyces cerevisiae (strain ATCC 204508 / S288c) (Baker's yeast).